Consider the following 177-residue polypeptide: ATP synthase subunit delta (177 aa).

The protein belongs to the ATPase delta chain family. As to quaternary structure, F-type ATPases have 2 components, F(1) - the catalytic core - and F(0) - the membrane proton channel. F(1) has five subunits: alpha(3), beta(3), gamma(1), delta(1), epsilon(1). F(0) has three main subunits: a(1), b(2) and c(10-14). The alpha and beta chains form an alternating ring which encloses part of the gamma chain. F(1) is attached to F(0) by a central stalk formed by the gamma and epsilon chains, while a peripheral stalk is formed by the delta and b chains.

Its subcellular location is the cell inner membrane. F(1)F(0) ATP synthase produces ATP from ADP in the presence of a proton or sodium gradient. F-type ATPases consist of two structural domains, F(1) containing the extramembraneous catalytic core and F(0) containing the membrane proton channel, linked together by a central stalk and a peripheral stalk. During catalysis, ATP synthesis in the catalytic domain of F(1) is coupled via a rotary mechanism of the central stalk subunits to proton translocation. Functionally, this protein is part of the stalk that links CF(0) to CF(1). It either transmits conformational changes from CF(0) to CF(1) or is implicated in proton conduction. In Shigella boydii serotype 18 (strain CDC 3083-94 / BS512), this protein is ATP synthase subunit delta.